Consider the following 444-residue polypeptide: ATP-dependent RNA helicase sub2 (444 aa).

The Q motif motif lies at 59–87; that stretch reads TGFREFLLKPELLRAISWCGFEHPSEVQQ. A Helicase ATP-binding domain is found at 90–265; it reads IPQAILGTDV…KKFMQNPLEI (176 aa). 103–110 serves as a coordination point for ATP; the sequence is AKSGLGKT. Positions 212 to 215 match the DECD box motif; that stretch reads DECD. A Helicase C-terminal domain is found at 277–438; sequence GLQQYYIKLE…EYPEGGVDSA (162 aa).

Belongs to the DEAD box helicase family. DECD subfamily.

It is found in the nucleus. The catalysed reaction is ATP + H2O = ADP + phosphate + H(+). Functionally, ATP-binding RNA helicase involved in transcription elongation and required for the export of mRNA out of the nucleus. SUB2 also plays a role in pre-mRNA splicing and spliceosome assembly. May be involved in rDNA and telomeric silencing, and maintenance of genome integrity. The sequence is that of ATP-dependent RNA helicase sub2 (sub2) from Sclerotinia sclerotiorum (strain ATCC 18683 / 1980 / Ss-1) (White mold).